Here is a 120-residue protein sequence, read N- to C-terminus: UPF0231 protein Spro_4007 (120 aa).

The protein belongs to the UPF0231 family.

This is UPF0231 protein Spro_4007 from Serratia proteamaculans (strain 568).